Consider the following 245-residue polypeptide: Gas vesicle protein F (245 aa).

The protein belongs to the gas vesicle GvpF/GvpL family. Binds GvpA.

The protein localises to the gas vesicle. Its function is as follows. A minor component of the gas vesicle, may be involved in preventing GvpA aggregation during gas vesicle nucleation. Gas vesicles (GV) are hollow, gas filled proteinaceous nanostructures. During planktonic growth they allow positioning of the organism at a favorable depth for light or nutrient acquisition. This Dolichospermum flosaquae (Anabaena flos-aquae) protein is Gas vesicle protein F.